The primary structure comprises 384 residues: Flap endonuclease 1 (384 aa).

The tract at residues Met-1–Arg-105 is N-domain. Position 34 (Asp-34) interacts with Mg(2+). Arg-71 is a binding site for DNA. Mg(2+)-binding residues include Asp-87, Glu-159, Glu-161, Asp-180, and Asp-182. Residues Glu-123–His-254 are I-domain. Residue Glu-159 coordinates DNA. The DNA site is built by Gly-232 and Asp-234. Asp-234 contacts Mg(2+). The tract at residues Val-338–Ile-346 is interaction with PCNA. Residues Ile-349–Lys-384 form a disordered region. Residues Lys-364–Lys-384 are compositionally biased toward low complexity.

It belongs to the XPG/RAD2 endonuclease family. FEN1 subfamily. As to quaternary structure, interacts with PCNA. Three molecules of repg bind to one PCNA trimer with each molecule binding to one PCNA monomer. PCNA stimulates the nuclease activity without altering cleavage specificity. It depends on Mg(2+) as a cofactor. Post-translationally, phosphorylated. Phosphorylation upon DNA damage induces relocalization to the nuclear plasma.

It localises to the nucleus. The protein resides in the nucleolus. Its subcellular location is the nucleoplasm. The protein localises to the mitochondrion. In terms of biological role, structure-specific nuclease with 5'-flap endonuclease and 5'-3' exonuclease activities involved in DNA replication and repair. During DNA replication, cleaves the 5'-overhanging flap structure that is generated by displacement synthesis when DNA polymerase encounters the 5'-end of a downstream Okazaki fragment. It enters the flap from the 5'-end and then tracks to cleave the flap base, leaving a nick for ligation. Also involved in the long patch base excision repair (LP-BER) pathway, by cleaving within the apurinic/apyrimidinic (AP) site-terminated flap. Acts as a genome stabilization factor that prevents flaps from equilibrating into structures that lead to duplications and deletions. Also possesses 5'-3' exonuclease activity on nicked or gapped double-stranded DNA, and exhibits RNase H activity. Also involved in replication and repair of rDNA and in repairing mitochondrial DNA. In Dictyostelium discoideum (Social amoeba), this protein is Flap endonuclease 1.